A 680-amino-acid polypeptide reads, in one-letter code: GTPase Obg (680 aa).

Positions 2–160 (DQFIDVVSFE…LNIRLEVKLI (159 aa)) constitute an Obg domain. The region spanning 161–336 (ADIGLVGMPN…LDGDMLDKVT (176 aa)) is the OBG-type G domain. Residues 167–174 (GMPNTGKS), 192–196 (FTTLT), 214–217 (DIPG), 281–284 (NKTD), and 317–319 (PEI) each bind GTP. 2 residues coordinate Mg(2+): serine 174 and threonine 194. Positions 371–680 (TKRVFGPVVS…NGVLSYAVNI (310 aa)) are radical SAM domain. The region spanning 383 to 613 (LGNSLGIDVI…IEIDVPSVSD (231 aa)) is the Radical SAM core domain. Cysteine 397, cysteine 401, and cysteine 404 together coordinate [4Fe-4S] cluster.

It belongs to the TRAFAC class OBG-HflX-like GTPase superfamily. OBG GTPase family. As to quaternary structure, monomer. Requires Mg(2+) as cofactor. It depends on [4Fe-4S] cluster as a cofactor.

The protein localises to the cytoplasm. In terms of biological role, an essential GTPase which binds GTP, GDP and possibly (p)ppGpp with moderate affinity, with high nucleotide exchange rates and a fairly low GTP hydrolysis rate. Plays a role in control of the cell cycle, stress response, ribosome biogenesis and in those bacteria that undergo differentiation, in morphogenesis control. This chain is GTPase Obg, found in Brachyspira hyodysenteriae (strain ATCC 49526 / WA1).